The sequence spans 563 residues: MYLKLLEEAGRLMKQAVADAGYTVEDMSLVESQHADVSSSLPFRLAKELKKNPKEIAAAIVEKMGKSEYIDRVEATGAYINFYASQKYITDSLKEILSEKKFFELEPNGIKVILEHTSANPTGPLHVGRGRNPIIGDTLARLLRAGGYDLEVQYYVDDMGKQEATIVWGYDHLDRIKPGKPDTDKPDHEIVEVYRAATDLRKSDEAVEKEISEILNAYEHMDPATAVKFREMVERCLEGQKMTLARMNVFYDRFVWESDFVRDGSVNKAVKKLAESQYATTKDGALALDLSSFGMDKEFVLTRADGTSLYTTRDIAFHVWKLARCDRAINVLGEDQKLAMQRLNAALSILGEKKAPTIVFYSFVSLPEGRMSTRKGVVVNLDDLLDEAVERAYVEVDKRRKDIPEEKKRQIAEAVGIGAVRFDIVRVAPEKSITFKWETALDFEKQGAPFIQYAHARCCSILEKAKPGEYDASMLREPEEAALVKKIAMMPYVIKNASTELKPHVIAIYARELAEAFNQFYRVSPVLIAEPELKEARLALVEASRKALAASLGMLGIAAIEEM.

Residues 119–129 carry the 'HIGH' region motif; that stretch reads ANPTGPLHVGR.

It belongs to the class-I aminoacyl-tRNA synthetase family.

The protein localises to the cytoplasm. It carries out the reaction tRNA(Arg) + L-arginine + ATP = L-arginyl-tRNA(Arg) + AMP + diphosphate. In Methanocella arvoryzae (strain DSM 22066 / NBRC 105507 / MRE50), this protein is Arginine--tRNA ligase.